We begin with the raw amino-acid sequence, 206 residues long: MKQMVCWLTAGLLTLGGLPARAGDTVPAVPETPAAPAAPAVQETPASSAAPGFWQRSWDNVETTWRSDRYELYLPAITWHNRAFYDRDKIDEYNEHPWGLGLGRYRYDSDGNWHALYAMFFLDSHDKVEPFAGYAWQKIWRPADDVRLGAGFTVGVTARSDYSYIPFPAILPLVSVEYRRLALQATYIPGGHNNGNVLFGWLRWQL.

The signal sequence occupies residues Met-1 to Ala-22. A compositionally biased stretch (low complexity) spans Val-26 to Ala-46. A disordered region spans residues Val-26–Ala-50. Active-site residues include His-80, Asp-123, and Ser-124.

It belongs to the lipid A palmitoyltransferase family. As to quaternary structure, homodimer.

It localises to the cell outer membrane. The enzyme catalyses a lipid A + a 1,2-diacyl-sn-glycero-3-phosphocholine = a hepta-acyl lipid A + a 2-acyl-sn-glycero-3-phosphocholine. It carries out the reaction a lipid IVA + a 1,2-diacyl-sn-glycero-3-phosphocholine = a lipid IVB + a 2-acyl-sn-glycero-3-phosphocholine. It catalyses the reaction a lipid IIA + a 1,2-diacyl-sn-glycero-3-phosphocholine = a lipid IIB + a 2-acyl-sn-glycero-3-phosphocholine. Functionally, transfers a fatty acid residue from the sn-1 position of a phospholipid to the N-linked hydroxyfatty acid chain on the proximal unit of lipid A or its precursors. The polypeptide is Lipid A acyltransferase PagP (Laribacter hongkongensis (strain HLHK9)).